The following is an 871-amino-acid chain: Protein translocase subunit SecA (871 aa).

ATP contacts are provided by residues Gln80, 98 to 102 (GEGKT), and Asp537.

It belongs to the SecA family. In terms of assembly, monomer and homodimer. Part of the essential Sec protein translocation apparatus which comprises SecA, SecYEG and auxiliary proteins SecDF. Other proteins may also be involved.

The protein localises to the cell inner membrane. It is found in the cytoplasm. It catalyses the reaction ATP + H2O + cellular proteinSide 1 = ADP + phosphate + cellular proteinSide 2.. Functionally, part of the Sec protein translocase complex. Interacts with the SecYEG preprotein conducting channel. Has a central role in coupling the hydrolysis of ATP to the transfer of proteins into and across the cell membrane, serving as an ATP-driven molecular motor driving the stepwise translocation of polypeptide chains across the membrane. This chain is Protein translocase subunit SecA, found in Thermotoga sp. (strain RQ2).